A 316-amino-acid polypeptide reads, in one-letter code: Glucan endo-1,3-beta-glucosidase GV (316 aa).

The active-site Proton donor is the Glu99. Glu239 functions as the Nucleophile in the catalytic mechanism.

The protein belongs to the glycosyl hydrolase 17 family.

It is found in the cytoplasm. It carries out the reaction Hydrolysis of (1-&gt;3)-beta-D-glucosidic linkages in (1-&gt;3)-beta-D-glucans.. Its function is as follows. May provide a degree of protection against microbial invasion of germinated barley grain through its ability to degrade fungal cell wall polysaccharides. The protein is Glucan endo-1,3-beta-glucosidase GV of Hordeum vulgare (Barley).